The primary structure comprises 161 residues: Phosphohistidine phosphatase SixA (161 aa).

The protein belongs to the SixA phosphatase family.

In terms of biological role, exhibits phosphohistidine phosphatase activity towards the HPt domain of the ArcB sensor involved in the multistep His-Asp phosphorelay. This Escherichia coli (strain K12) protein is Phosphohistidine phosphatase SixA (sixA).